A 1407-amino-acid chain; its full sequence is DNA-directed RNA polymerase subunit beta' (1407 aa).

Zn(2+) is bound by residues C70, C72, C85, and C88. Mg(2+)-binding residues include D460, D462, and D464. The Zn(2+) site is built by C814, C888, C895, and C898. K972 is subject to N6-acetyllysine.

The protein belongs to the RNA polymerase beta' chain family. The RNAP catalytic core consists of 2 alpha, 1 beta, 1 beta' and 1 omega subunit. When a sigma factor is associated with the core the holoenzyme is formed, which can initiate transcription. Mg(2+) is required as a cofactor. Zn(2+) serves as cofactor.

It catalyses the reaction RNA(n) + a ribonucleoside 5'-triphosphate = RNA(n+1) + diphosphate. DNA-dependent RNA polymerase catalyzes the transcription of DNA into RNA using the four ribonucleoside triphosphates as substrates. This chain is DNA-directed RNA polymerase subunit beta', found in Shigella sonnei (strain Ss046).